We begin with the raw amino-acid sequence, 1247 residues long: Clustered mitochondria protein homolog (1247 aa).

The tract at residues 1 to 43 (MTLGSETKTDVEVPIINGKHEIPQEENDSGHSSINTPDSSEPD) is disordered. Residues 30–39 (GHSSINTPDS) show a composition bias toward polar residues. A Clu domain is found at 329 to 579 (SDSLRAIELT…RSMPPDVHYL (251 aa)). The disordered stretch occupies residues 1222 to 1247 (GKQQNGTTEESKTTDVAAQLDNETLD).

This sequence belongs to the CLU family.

It is found in the cytoplasm. MRNA-binding protein involved in proper cytoplasmic distribution of mitochondria. The sequence is that of Clustered mitochondria protein homolog from Caenorhabditis elegans.